We begin with the raw amino-acid sequence, 140 residues long: RxLR effector protein CRE2 (140 aa).

An N-terminal signal peptide occupies residues 1-24 (MRWLIWTAVSTLVMLLAMTEVSAS). Residues 56 to 72 (RSLRDKSSSLITESEER) carry the RxLR-dEER motif.

Belongs to the RxLR effector family.

The protein localises to the secreted. It localises to the host cell. Functionally, effector that is involved in host plant infection. Contributes to virulence during the early infection stage, by inhibiting plant defense responses induced by both PAMP-triggered immunity (PTI) and effector-triggered immunity (ETI). The sequence is that of RxLR effector protein CRE2 from Phytophthora infestans (strain T30-4) (Potato late blight agent).